A 255-amino-acid chain; its full sequence is Putative F-box protein L126 (255 aa).

In terms of domain architecture, F-box spans Met1–Lys46.

The sequence is that of Putative F-box protein L126 from Acanthamoeba polyphaga (Amoeba).